The primary structure comprises 444 residues: MVDHISPRASPGPIRSSQTRRARKLRDSCTSCASSKVRCTKEKPACARCIERGLACQYMVSKRMGRNPRAPSPLDSTRRPSESLPSAGSEQGLPAHNTYSTPHAHTQAHTHAHSHPQPHPQSHPQSNQPPHALPTPNGSSSVSAIFSHQSPPPLVETQGLGGDLAGQAQSTLSSLTVDSEFGGSLQSMEHGNHADFLAESTGSLFDAFLEVGTPMIDPFLESAPLPPFQARYCCFSLALQTLTCLFPHAPLGCQLRLTDGEDSSCNLMTTDMVISGNKKATDAVRKILGCSCAQDGYLLSMVVLIVLKVLGWYAAAAGTQCTSTAAGGETNSGSCSNSPATVSSGCLTEERVLHHPSMVGEDCVDEEDQPRVAAQLVLSELHRVQSLVNLLAKRLQEGGDDAAGIPAHHPASPFSLLGFSGLEANLRHRLRAVSSDIIDYLHRE.

The disordered stretch occupies residues 1–26 (MVDHISPRASPGPIRSSQTRRARKLR). The segment at residues 29–56 (CTSCASSKVRCTKEKPACARCIERGLAC) is a DNA-binding region (zn(2)-C6 fungal-type). The tract at residues 64 to 167 (MGRNPRAPSP…QGLGGDLAGQ (104 aa)) is disordered. Basic residues predominate over residues 106 to 116 (TQAHTHAHSHP). Residues 120–130 (PQSHPQSNQPP) show a composition bias toward low complexity. Residues 136-149 (PNGSSSVSAIFSHQ) show a composition bias toward polar residues.

It localises to the nucleus. Its pathway is mycotoxin biosynthesis; aflatoxin biosynthesis. Involved in the regulation of aflatoxin biosynthesis. May have a role in nitrate assimilation and sclerotial morphogenesis. The chain is Aflatoxin biosynthesis regulatory protein (aflR) from Aspergillus parasiticus.